The primary structure comprises 364 residues: Long-wave-sensitive opsin 1 (364 aa).

The Extracellular segment spans residues 1 to 58 (MTQRWGPQRLAGGQPQAGLEESTQASIFTYTNSNATRDPFEGPNYHIAPRWVYHLTSA). O-linked (GlcNAc) serine glycosylation occurs at Ser-22. Asn-34 carries N-linked (GlcNAc...) asparagine glycosylation. The helical transmembrane segment at 59–79 (WMIFVVIASVFTNGLVLVATM) threads the bilayer. Residues 80–90 (RFKKLRHPLNW) are Cytoplasmic-facing. The helical transmembrane segment at 91–111 (ILVNLAIADLAETIIASTISV) threads the bilayer. Topologically, residues 112–126 (VNQIYGYFVLGHPLC) are extracellular. An intrachain disulfide couples Cys-126 to Cys-203. A helical transmembrane segment spans residues 127–147 (VVEGYTVSLCGITGLWSLAII). The Cytoplasmic segment spans residues 148-168 (SWERWLVVCKPFGNVRFDAKL). Residues 169 to 189 (AIAGIAFSWIWAAVWTAPPIF) traverse the membrane as a helical segment. Residues 190-219 (GWSRYWPHGLKTSCGPDVFSGSSYPGVQSY) lie on the Extracellular side of the membrane. Residues 220-240 (MIVLMTTCCIIPLSVIILCYL) form a helical membrane-spanning segment. The Cytoplasmic segment spans residues 241–269 (QVWLAIRAVAKQQKESESTQKAEKEVTRM). Residues 270-290 (VVVMVLAYCLCWGPYTFFACF) traverse the membrane as a helical segment. Topologically, residues 291-301 (AAAHPGYAFHP) are extracellular. The chain crosses the membrane as a helical span at residues 302-324 (LVAALPAYFAKSATIYNPIIYVF). The residue at position 312 (Lys-312) is an N6-(retinylidene)lysine. Residues 325–364 (MNRQFRNCILQLFGKKVDDSSELSSASRTEASSVSSVSPA) lie on the Cytoplasmic side of the membrane.

The protein belongs to the G-protein coupled receptor 1 family. Opsin subfamily. Phosphorylated on some or all of the serine and threonine residues present in the C-terminal region. As to expression, the three color pigments are found in the cone photoreceptor cells.

The protein resides in the membrane. In terms of biological role, visual pigments are the light-absorbing molecules that mediate vision. They consist of an apoprotein, opsin, covalently linked to cis-retinal. In Canis lupus familiaris (Dog), this protein is Long-wave-sensitive opsin 1 (OPN1LW).